Reading from the N-terminus, the 361-residue chain is Septin-1 (361 aa).

The Septin-type G domain maps to 32-304 (KGFEFTLMVV…ENYRSDRLAK (273 aa)). The G1 motif stretch occupies residues 42 to 49 (GESGLGKS). Residues 42-49 (GESGLGKS), T76, G102, 181-189 (KADCLTKKE), G239, and R254 contribute to the GTP site. Residues 99 to 102 (DTPG) form a G3 motif region. Residues 180–183 (AKAD) form a G4 motif region. S319 is modified (phosphoserine).

This sequence belongs to the TRAFAC class TrmE-Era-EngA-EngB-Septin-like GTPase superfamily. Septin GTPase family. As to quaternary structure, likely part of a multicomponent septin complex that includes pnut. Interacts with pnut. Interacts with park. In terms of processing, ubiquitinated by park, leading to its degradation by the proteasome. In terms of tissue distribution, accumulates at the leading edge of the cleavage furrow in dividing cells and cellularizing embryos (at protein level). Also accumulates at the leading edge of the embryo epithelium during dorsal closure, in the embryonic neurons, and at the baso-lateral surfaces of ovarian follicle cells (at protein level).

It localises to the cytoplasm. Functionally, involved in cytokinesis. May be involved in p53-dependent apoptosis. The sequence is that of Septin-1 from Drosophila melanogaster (Fruit fly).